A 183-amino-acid polypeptide reads, in one-letter code: Probable RNA 2'-phosphotransferase (183 aa).

This sequence belongs to the KptA/TPT1 family.

Functionally, removes the 2'-phosphate from RNA via an intermediate in which the phosphate is ADP-ribosylated by NAD followed by a presumed transesterification to release the RNA and generate ADP-ribose 1''-2''-cyclic phosphate (APPR&gt;P). May function as an ADP-ribosylase. This Clostridium perfringens (strain 13 / Type A) protein is Probable RNA 2'-phosphotransferase.